We begin with the raw amino-acid sequence, 81 residues long: Costars family protein ABRACL (81 aa).

Met-1 bears the N-acetylmethionine mark.

Belongs to the costars family.

The chain is Costars family protein ABRACL (Abracl) from Mus musculus (Mouse).